We begin with the raw amino-acid sequence, 201 residues long: Putative manganese efflux pump MntP 2 (201 aa).

The next 6 helical transmembrane spans lie at 3-23 (LISV…VSIT), 39-59 (IGLF…SIGI), 65-85 (IAAL…GKMI), 116-136 (LILL…SFAF), 141-161 (IINT…IGVM), and 176-196 (ILGG…HTNI).

The protein belongs to the MntP (TC 9.B.29) family.

Its subcellular location is the cell membrane. Its function is as follows. Probably functions as a manganese efflux pump. The polypeptide is Putative manganese efflux pump MntP 2 (Clostridium botulinum (strain Langeland / NCTC 10281 / Type F)).